We begin with the raw amino-acid sequence, 239 residues long: Endolytic peptidoglycan transglycosylase RlpA (239 aa).

Residues Met-1 to Ala-25 form the signal peptide. The SPOR domain maps to Val-160 to Gly-239.

Belongs to the RlpA family.

Its function is as follows. Lytic transglycosylase with a strong preference for naked glycan strands that lack stem peptides. This is Endolytic peptidoglycan transglycosylase RlpA from Neisseria meningitidis serogroup B (strain ATCC BAA-335 / MC58).